Reading from the N-terminus, the 315-residue chain is DNA-directed RNA polymerase subunit alpha (315 aa).

The segment at 1–228 (MAQFQIECVE…DLFNPLKDIS (228 aa)) is alpha N-terminal domain (alpha-NTD). The interval 243–315 (TAQIPIEELQ…LPQERSSKHN (73 aa)) is alpha C-terminal domain (alpha-CTD).

It belongs to the RNA polymerase alpha chain family. In terms of assembly, homodimer. In cyanobacteria the RNAP catalytic core is composed of 2 alpha, 1 beta, 1 beta', 1 gamma and 1 omega subunit. When a sigma factor is associated with the core the holoenzyme is formed, which can initiate transcription.

The enzyme catalyses RNA(n) + a ribonucleoside 5'-triphosphate = RNA(n+1) + diphosphate. Functionally, DNA-dependent RNA polymerase catalyzes the transcription of DNA into RNA using the four ribonucleoside triphosphates as substrates. The protein is DNA-directed RNA polymerase subunit alpha of Nostoc sp. (strain PCC 7120 / SAG 25.82 / UTEX 2576).